The sequence spans 91 residues: MLQYRIIVDGRVQGVGFRYFVQMEADKRKLAGWVKNRDDGRVEILAEGPENALQSFVEAVKNGSPFSKVTDISVTESRSLEGHHRFSIVYS.

The Acylphosphatase-like domain maps to 3 to 90 (QYRIIVDGRV…EGHHRFSIVY (88 aa)). Active-site residues include R18 and N36.

This sequence belongs to the acylphosphatase family.

The catalysed reaction is an acyl phosphate + H2O = a carboxylate + phosphate + H(+). This is Acylphosphatase (acyP) from Bacillus subtilis (strain 168).